A 359-amino-acid chain; its full sequence is Mitochondrial glutathione transporter SLC25A39 (359 aa).

Residues 1-14 lie on the Mitochondrial intermembrane side of the membrane; it reads MADQDPGGISPLQQ. Solcar repeat units follow at residues 9-151, 159-243, and 253-347; these read ISPL…LKAF, SDLY…VKSW, and TSVG…GKNF. Residues 15-35 form a helical membrane-spanning segment; it reads MVASGAGAVVTSLFMTPLDVV. The Mitochondrial matrix portion of the chain corresponds to 36-121; sequence KVRLQSQRPS…VKIVRHEGTR (86 aa). 4 residues coordinate [2Fe-2S] cluster: Cys-74, Cys-78, Cys-88, and Cys-94. Residues 122 to 142 traverse the membrane as a helical segment; it reads TLWSGLPATLVMTVPATAAYF. At 143 to 164 the chain is on the mitochondrial intermembrane side; the sequence is TAYDQLKAFLCGRALTSDLYAP. Residues 165-185 traverse the membrane as a helical segment; it reads MVAGALARLGTVTVISPLELV. Over 186–214 the chain is Mitochondrial matrix; that stretch reads RTKLQAQHLSYRELGTCVRAAVAQGGWRS. The chain crosses the membrane as a helical span at residues 215-235; sequence LWLGWGPTALRDVPFSALYWF. Over 236–255 the chain is Mitochondrial intermembrane; it reads NYELVKSWLSGLRPKDQTSV. Residues 256–276 traverse the membrane as a helical segment; sequence GISFVAGGISGMVAATLTLPF. The Mitochondrial matrix segment spans residues 277-317; that stretch reads DVVKTQRQVALGAVEALRVMPLNTDSTWLLLRRILAESGTR. The helical transmembrane segment at 318 to 338 threads the bilayer; the sequence is GLFAGFLPRIIKAAPSCAIMI. Residues 339 to 359 are Mitochondrial intermembrane-facing; it reads STYEFGKNFFQRLNREQLLSP.

The protein belongs to the mitochondrial carrier (TC 2.A.29) family. Post-translationally, cleaved and degraded by AFG3L2; degradation by AFG3L2 is regulated by the ability of SLC25A39 to bind iron-sulfur. In absence of mitochondrial glutathione, SLC25A39 binds iron-sulfur, preventing cleavage and degradation by AFG3L2. The presence of mitochondrial glutathione prevents iron-sulfur-binding to SLC25A39, promoting cleavage and degradation by AFG3L2.

The protein resides in the mitochondrion inner membrane. It catalyses the reaction glutathione(in) = glutathione(out). The activity of SLC25A39 is regulated by levels of mitochondrial glutathione via its ability to bind [2Fe-2S] iron-sulfur cluster. Upon physiological levels of mitochondrial glutathione, glutathione prevents iron-sulfur-binding to SLC25A39 promoting cleavage and degradation by AFG3L2. Upon depletion of mitochondrial glutathione, SLC25A39 binds iron-sulfur, preventing cleavage and degradation by AFG3L2. Functionally, mitochondrial transporter required for glutathione import into mitochondria. Glutathione, which plays key roles in oxidative metabolism, is produced exclusively in the cytosol and is imported in many organelles. Mitochondrial glutathione is required for the activity and stability of proteins containing iron-sulfur clusters, as well as erythropoiesis. This is Mitochondrial glutathione transporter SLC25A39 (SLC25A39) from Bos taurus (Bovine).